We begin with the raw amino-acid sequence, 228 residues long: Large ribosomal subunit protein uL3 (228 aa).

Residues 157 to 176 (CHRHAGGTGMSASPSRTFKG) are disordered.

The protein belongs to the universal ribosomal protein uL3 family. In terms of assembly, part of the 50S ribosomal subunit. Forms a cluster with proteins L14 and L19.

Its function is as follows. One of the primary rRNA binding proteins, it binds directly near the 3'-end of the 23S rRNA, where it nucleates assembly of the 50S subunit. This Rhodopirellula baltica (strain DSM 10527 / NCIMB 13988 / SH1) protein is Large ribosomal subunit protein uL3.